The following is a 259-amino-acid chain: uncharacterized protein (259 aa).

A signal peptide spans 1-22 (MKHSSKIIVFVSFLILTIFIGG). A lipid anchor (N-palmitoyl cysteine) is attached at Cys-23. Residue Cys-23 is the site of S-diacylglycerol cysteine attachment.

Belongs to the staphylococcal tandem lipoprotein family.

It is found in the cell membrane. This is an uncharacterized protein from Staphylococcus epidermidis (strain ATCC 35984 / DSM 28319 / BCRC 17069 / CCUG 31568 / BM 3577 / RP62A).